The primary structure comprises 321 residues: Nucleus-vacuole junction protein 1 (321 aa).

A signal peptide spans M1–G22. The tract at residues E73 to N125 is TSC13-binding. The chain crosses the membrane as a helical span at residues I94–G114. Residues K139–N195 form an OSH1-binding region. Residues S156 and S199 each carry the phosphoserine modification. The disordered stretch occupies residues L211–I275. The interval D233–Y321 is VAC8-binding. Residues S242–R262 are compositionally biased toward basic and acidic residues. Over residues T263–S272 the composition is skewed to low complexity. Phosphoserine is present on residues S285 and S298. Residues P299–Y321 form a disordered region.

As to quaternary structure, interacts with OSH1, TSC13 and VAC8.

The protein resides in the nucleus outer membrane. Its function is as follows. Involved in the formation of nucleus-vacuole junctions (NVJs) during piecemeal microautophagy of the nucleus (PMN). NVJs are interorganelle interfaces mediated by NVJ1 in the nuclear envelope and VAC8 on the vacuole membrane. Together, NVJ1 and VAC8 form Velcro-like patches through which teardrop-like portions of the nucleus are pinched off into the vacuolar lumen and degraded by the PMN process. Also acts as an outer-nuclear membrane receptor for OSH1 and TSC13. This Saccharomyces cerevisiae (strain ATCC 204508 / S288c) (Baker's yeast) protein is Nucleus-vacuole junction protein 1 (NVJ1).